Consider the following 176-residue polypeptide: MSTGSISDVDEFHESELLDGLPKFGSGKDPGTSNESTEDSSNCEGASVSECTGKRRKSANMRRSAPNGVAQEGKQVQRNAANARERARMRVLSKAFSRLKTTLPWVPPDTKLSKLDTLRLASSYIAHLRQILANDKYENGYIHPVNLTWPFMVAGKPENELKEMLNSTRLCGTTAS.

Residues 1–84 are disordered; it reads MSTGSISDVD…QVQRNAANAR (84 aa). Residues 31 to 44 show a composition bias toward polar residues; sequence GTSNESTEDSSNCE. In terms of domain architecture, bHLH spans 76–128; that stretch reads VQRNAANARERARMRVLSKAFSRLKTTLPWVPPDTKLSKLDTLRLASSYIAHL.

In terms of assembly, efficient DNA binding requires dimerization with another bHLH protein. In terms of tissue distribution, expressed in the cranial paraxial mesoderm from 20 hpf and subsequently becomes restricted to the pharyngeal mesoderm that will form the muscle. Expression in the proepicardial organ is first seen at 40hpf in a cluster of cells between the myocardium and yolk. Also expressed in the developing arches. Expression begins to surround the heart by day 3 of development, and by 96 hpf, expression is restricted to the outer epicardial layer surrounding the myocardium.

The protein localises to the nucleus. Functionally, involved in epithelial-mesenchymal interactions in kidney and lung morphogenesis that include epithelial differentiation and branching morphogenesis. The chain is Transcription factor 21 from Danio rerio (Zebrafish).